A 226-amino-acid chain; its full sequence is UPF0758 protein GTNG_2548 (226 aa).

The MPN domain maps to Val-104–Val-226. Residues His-175, His-177, and Asp-188 each coordinate Zn(2+). The JAMM motif signature appears at His-175–Asp-188.

It belongs to the UPF0758 family.

This is UPF0758 protein GTNG_2548 from Geobacillus thermodenitrificans (strain NG80-2).